A 424-amino-acid polypeptide reads, in one-letter code: Putative glutamate--cysteine ligase 2-3 (424 aa).

Disordered regions lie at residues 1-20 (MQMA…PVLV) and 405-424 (GAAA…VRRP).

It belongs to the glutamate--cysteine ligase type 2 family. YbdK subfamily.

It catalyses the reaction L-cysteine + L-glutamate + ATP = gamma-L-glutamyl-L-cysteine + ADP + phosphate + H(+). Functionally, ATP-dependent carboxylate-amine ligase which exhibits weak glutamate--cysteine ligase activity. The polypeptide is Putative glutamate--cysteine ligase 2-3 (Paenarthrobacter aurescens (strain TC1)).